A 363-amino-acid polypeptide reads, in one-letter code: tRNA/tmRNA (uracil-C(5))-methyltransferase (363 aa).

S-adenosyl-L-methionine-binding residues include Gln-187, Tyr-215, Asn-220, Glu-236, and Asp-296. Catalysis depends on Cys-321, which acts as the Nucleophile. The Proton acceptor role is filled by Glu-355.

It belongs to the class I-like SAM-binding methyltransferase superfamily. RNA M5U methyltransferase family. TrmA subfamily.

It catalyses the reaction uridine(54) in tRNA + S-adenosyl-L-methionine = 5-methyluridine(54) in tRNA + S-adenosyl-L-homocysteine + H(+). The enzyme catalyses uridine(341) in tmRNA + S-adenosyl-L-methionine = 5-methyluridine(341) in tmRNA + S-adenosyl-L-homocysteine + H(+). Functionally, dual-specificity methyltransferase that catalyzes the formation of 5-methyluridine at position 54 (m5U54) in all tRNAs, and that of position 341 (m5U341) in tmRNA (transfer-mRNA). This chain is tRNA/tmRNA (uracil-C(5))-methyltransferase, found in Haemophilus influenzae (strain 86-028NP).